We begin with the raw amino-acid sequence, 181 residues long: Adenylyl-sulfate kinase (181 aa).

Residue 20-27 (GLSGAGKS) participates in ATP binding. Ser-94 (phosphoserine intermediate) is an active-site residue.

This sequence belongs to the APS kinase family.

The enzyme catalyses adenosine 5'-phosphosulfate + ATP = 3'-phosphoadenylyl sulfate + ADP + H(+). It participates in sulfur metabolism; hydrogen sulfide biosynthesis; sulfite from sulfate: step 2/3. In terms of biological role, catalyzes the synthesis of activated sulfate. In Deinococcus deserti (strain DSM 17065 / CIP 109153 / LMG 22923 / VCD115), this protein is Adenylyl-sulfate kinase.